We begin with the raw amino-acid sequence, 394 residues long: Elongation factor Tu (394 aa).

One can recognise a tr-type G domain in the interval 10–204 (KPHVNIGTIG…AVDEYIPTPD (195 aa)). Residues 19–26 (GHIDHGKT) are G1. A GTP-binding site is contributed by 19–26 (GHIDHGKT). Thr26 serves as a coordination point for Mg(2+). Residues 60-64 (GITIN) are G2. The tract at residues 81-84 (DCPG) is G3. GTP contacts are provided by residues 81–85 (DCPGH) and 136–139 (NKCD). Residues 136 to 139 (NKCD) form a G4 region. Residues 174–176 (SAL) form a G5 region.

It belongs to the TRAFAC class translation factor GTPase superfamily. Classic translation factor GTPase family. EF-Tu/EF-1A subfamily. Monomer.

It localises to the cytoplasm. The catalysed reaction is GTP + H2O = GDP + phosphate + H(+). Functionally, GTP hydrolase that promotes the GTP-dependent binding of aminoacyl-tRNA to the A-site of ribosomes during protein biosynthesis. The protein is Elongation factor Tu of Mycoplasmoides gallisepticum (strain R(low / passage 15 / clone 2)) (Mycoplasma gallisepticum).